The sequence spans 184 residues: Photosystem I assembly protein Ycf4 (184 aa).

2 helical membrane passes run 19–39 and 57–77; these read ISNFCWACILFLGSLGFLLVG and IIFFPQGIVMSFYGIAGLFIS.

It belongs to the Ycf4 family.

It localises to the plastid. It is found in the chloroplast thylakoid membrane. Functionally, seems to be required for the assembly of the photosystem I complex. The polypeptide is Photosystem I assembly protein Ycf4 (Drimys granadensis).